The chain runs to 463 residues: Putative pentatricopeptide repeat-containing protein At4g17915 (463 aa).

12 PPR repeats span residues 12–46 (STRL…GVDP), 47–81 (DVVT…GIRP), 82–116 (DVAT…GIYP), 117–152 (DLWS…GLNP), 153–186 (GPDT…RFKP), 187–221 (ELMT…GYTP), 222–256 (NAVT…GYTY), 257–291 (DGYA…GRRH), 292–326 (DIVS…GMKA), 327–361 (DEYT…GIGL), 362–392 (NLVT…MEVK), and 393–427 (DEYT…GIKI).

Belongs to the PPR family. P subfamily.

This is Putative pentatricopeptide repeat-containing protein At4g17915 from Arabidopsis thaliana (Mouse-ear cress).